A 386-amino-acid chain; its full sequence is 17-hydroxy-3-oxo-4-pregnene-20-carboxyl-CoA lyase (386 aa).

Tyr-292 functions as the Proton acceptor in the catalytic mechanism. Catalysis depends on Tyr-342, which acts as the Proton donor.

It belongs to the thiolase-like superfamily. In terms of assembly, homodimer. Interacts with the ChsH1/ChsH2 hydratase via the DUF35 C-terminal region of ChsH2 (ChsH2-DUF35). The ChsH1-ChsH2-Ltp2 protein complex is composed of two protomers that form a heterohexameric structure through the Ltp2 dimerization interface.

It carries out the reaction 17-hydroxy-3-oxochol-4-en-22-oyl-CoA = androst-4-ene-3,17-dione + propanoyl-CoA. The protein operates within steroid metabolism; cholesterol degradation. Its function is as follows. Involved in cholesterol side chain degradation. When associated with the ChsH1/ChsH2 hydratase, catalyzes the retroaldol cleavage of 17-hydroxy-3-oxo-4-pregnene-20-carboxyl-CoA (17-HOPC-CoA) produced by the hydratase, forming androst-4-ene-3,17-dione and propionyl-CoA. In Mycobacterium tuberculosis (strain ATCC 25618 / H37Rv), this protein is 17-hydroxy-3-oxo-4-pregnene-20-carboxyl-CoA lyase.